Reading from the N-terminus, the 291-residue chain is Lipoyl synthase, organellar chromatophore (291 aa).

[4Fe-4S] cluster-binding residues include cysteine 33, cysteine 38, cysteine 44, cysteine 59, cysteine 63, cysteine 66, and serine 274. A Radical SAM core domain is found at 45 to 263 (FAGGTATFLI…AIGELEMNFL (219 aa)).

This sequence belongs to the radical SAM superfamily. Lipoyl synthase family. [4Fe-4S] cluster is required as a cofactor.

Its subcellular location is the plastid. It localises to the organellar chromatophore. The enzyme catalyses [[Fe-S] cluster scaffold protein carrying a second [4Fe-4S](2+) cluster] + N(6)-octanoyl-L-lysyl-[protein] + 2 oxidized [2Fe-2S]-[ferredoxin] + 2 S-adenosyl-L-methionine + 4 H(+) = [[Fe-S] cluster scaffold protein] + N(6)-[(R)-dihydrolipoyl]-L-lysyl-[protein] + 4 Fe(3+) + 2 hydrogen sulfide + 2 5'-deoxyadenosine + 2 L-methionine + 2 reduced [2Fe-2S]-[ferredoxin]. The protein operates within protein modification; protein lipoylation via endogenous pathway; protein N(6)-(lipoyl)lysine from octanoyl-[acyl-carrier-protein]: step 2/2. Catalyzes the radical-mediated insertion of two sulfur atoms into the C-6 and C-8 positions of the octanoyl moiety bound to the lipoyl domains of lipoate-dependent enzymes, thereby converting the octanoylated domains into lipoylated derivatives. The sequence is that of Lipoyl synthase, organellar chromatophore from Paulinella chromatophora.